The chain runs to 101 residues: MAKISAVNRNAKRARMAGRDKAKRIALKNIIMDRTLPVEDRFEASMKLAELPRNGSRVRVRLRCKLTGRARANYRKFELCRVALRDLASSGQIPGMVKSSW.

This sequence belongs to the universal ribosomal protein uS14 family. In terms of assembly, part of the 30S ribosomal subunit. Contacts proteins S3 and S10.

Functionally, binds 16S rRNA, required for the assembly of 30S particles and may also be responsible for determining the conformation of the 16S rRNA at the A site. This Gluconacetobacter diazotrophicus (strain ATCC 49037 / DSM 5601 / CCUG 37298 / CIP 103539 / LMG 7603 / PAl5) protein is Small ribosomal subunit protein uS14.